We begin with the raw amino-acid sequence, 241 residues long: Probable septum site-determining protein MinC (241 aa).

Positions 109-135 are disordered; it reads PSGARERKVDPSSKTPAKPAEPTYRPT.

Belongs to the MinC family. Interacts with MinD and FtsZ.

Its function is as follows. Cell division inhibitor that blocks the formation of polar Z ring septums. Rapidly oscillates between the poles of the cell to destabilize FtsZ filaments that have formed before they mature into polar Z rings. Prevents FtsZ polymerization. The polypeptide is Probable septum site-determining protein MinC (Stutzerimonas stutzeri (strain A1501) (Pseudomonas stutzeri)).